A 170-amino-acid polypeptide reads, in one-letter code: Probable chemoreceptor glutamine deamidase CheD 3 (170 aa).

This sequence belongs to the CheD family.

It catalyses the reaction L-glutaminyl-[protein] + H2O = L-glutamyl-[protein] + NH4(+). Probably deamidates glutamine residues to glutamate on methyl-accepting chemotaxis receptors (MCPs), playing an important role in chemotaxis. The polypeptide is Probable chemoreceptor glutamine deamidase CheD 3 (Dechloromonas aromatica (strain RCB)).